A 208-amino-acid chain; its full sequence is NAD(P)H-hydrate epimerase (208 aa).

Residues 10–208 form the YjeF N-terminal domain; that stretch reads IRDAERQTLA…TLGVIMTPAN (199 aa). A (6S)-NADPHX-binding site is contributed by 54–58; it reads NNGGD. Residues Asn55 and Asp117 each contribute to the K(+) site. Residues 121–127 and Asp150 each bind (6S)-NADPHX; that span reads GIGLNRP. A K(+)-binding site is contributed by Ser153.

The protein belongs to the NnrE/AIBP family. Requires K(+) as cofactor.

It catalyses the reaction (6R)-NADHX = (6S)-NADHX. It carries out the reaction (6R)-NADPHX = (6S)-NADPHX. Functionally, catalyzes the epimerization of the S- and R-forms of NAD(P)HX, a damaged form of NAD(P)H that is a result of enzymatic or heat-dependent hydration. This is a prerequisite for the S-specific NAD(P)H-hydrate dehydratase to allow the repair of both epimers of NAD(P)HX. The chain is NAD(P)H-hydrate epimerase from Achromobacter xylosoxidans (strain A8).